A 339-amino-acid chain; its full sequence is Endo-beta-N-acetylglucosaminidase F1 (339 aa).

The segment at residues 1–50 is a signal peptide (or 51, or 52); it reads MKKFINQFSASLKNNILVFLAFPFVWTSCARDNPLSSENSNISPNAAARA. Residues 60–326 form the GH18 domain; that stretch reads IKLFSFTEVN…KLIAKELYGD (267 aa). Residue glutamate 182 is the Proton donor of the active site. Tryptophan 339 is a propeptide (removed in mature form).

The protein belongs to the glycosyl hydrolase 18 family. Monomer.

The protein localises to the secreted. It carries out the reaction an N(4)-(oligosaccharide-(1-&gt;3)-[oligosaccharide-(1-&gt;6)]-beta-D-Man-(1-&gt;4)-beta-D-GlcNAc-(1-&gt;4)-alpha-D-GlcNAc)-L-asparaginyl-[protein] + H2O = an oligosaccharide-(1-&gt;3)-[oligosaccharide-(1-&gt;6)]-beta-D-Man-(1-&gt;4)-D-GlcNAc + N(4)-(N-acetyl-beta-D-glucosaminyl)-L-asparaginyl-[protein]. Its function is as follows. Endohydrolysis of the di-N-acetylchitobiosyl unit in high-mannose glycopeptides and glycoproteins. Does not hydrolyze complex bi- or triantennary glycans. The presence of a core-bound fucose impedes endo F1 hydrolysis. This is Endo-beta-N-acetylglucosaminidase F1 (endOF1) from Elizabethkingia meningoseptica (Chryseobacterium meningosepticum).